Reading from the N-terminus, the 395-residue chain is S-adenosylmethionine synthase (395 aa).

His-18 is a binding site for ATP. Residue Asp-20 coordinates Mg(2+). Glu-46 contacts K(+). Glu-59 and Gln-103 together coordinate L-methionine. A flexible loop region spans residues 103 to 113 (QSADIAVGVDS). ATP-binding positions include 170 to 172 (DAK), Asp-244, 250 to 251 (RK), Ala-267, and Lys-271. An L-methionine-binding site is contributed by Asp-244. Residue Lys-275 participates in L-methionine binding.

The protein belongs to the AdoMet synthase family. In terms of assembly, homotetramer; dimer of dimers. Requires Mg(2+) as cofactor. K(+) is required as a cofactor.

Its subcellular location is the cytoplasm. The catalysed reaction is L-methionine + ATP + H2O = S-adenosyl-L-methionine + phosphate + diphosphate. It participates in amino-acid biosynthesis; S-adenosyl-L-methionine biosynthesis; S-adenosyl-L-methionine from L-methionine: step 1/1. In terms of biological role, catalyzes the formation of S-adenosylmethionine (AdoMet) from methionine and ATP. The overall synthetic reaction is composed of two sequential steps, AdoMet formation and the subsequent tripolyphosphate hydrolysis which occurs prior to release of AdoMet from the enzyme. This is S-adenosylmethionine synthase from Gluconacetobacter diazotrophicus (strain ATCC 49037 / DSM 5601 / CCUG 37298 / CIP 103539 / LMG 7603 / PAl5).